Here is a 272-residue protein sequence, read N- to C-terminus: 3-methyl-2-oxobutanoate hydroxymethyltransferase (272 aa).

Asp-52 and Asp-91 together coordinate Mg(2+). 3-methyl-2-oxobutanoate-binding positions include 52-53 (DS), Asp-91, and Lys-121. Glu-123 is a binding site for Mg(2+). Glu-190 functions as the Proton acceptor in the catalytic mechanism.

This sequence belongs to the PanB family. In terms of assembly, homodecamer; pentamer of dimers. Mg(2+) is required as a cofactor.

It localises to the cytoplasm. It catalyses the reaction 3-methyl-2-oxobutanoate + (6R)-5,10-methylene-5,6,7,8-tetrahydrofolate + H2O = 2-dehydropantoate + (6S)-5,6,7,8-tetrahydrofolate. The protein operates within cofactor biosynthesis; (R)-pantothenate biosynthesis; (R)-pantoate from 3-methyl-2-oxobutanoate: step 1/2. Its function is as follows. Catalyzes the reversible reaction in which hydroxymethyl group from 5,10-methylenetetrahydrofolate is transferred onto alpha-ketoisovalerate to form ketopantoate. In Flavobacterium johnsoniae (strain ATCC 17061 / DSM 2064 / JCM 8514 / BCRC 14874 / CCUG 350202 / NBRC 14942 / NCIMB 11054 / UW101) (Cytophaga johnsonae), this protein is 3-methyl-2-oxobutanoate hydroxymethyltransferase.